The primary structure comprises 381 residues: Ribosomal lysine N-methyltransferase set11 (381 aa).

Positions 23 to 224 constitute an SET domain; sequence PSLEFSVIPD…KGEQIFLCYG (202 aa). Tyr-223 contacts S-adenosyl-L-methionine.

Belongs to the class V-like SAM-binding methyltransferase superfamily. RKM2 family.

It localises to the cytoplasm. Its subcellular location is the nucleus. The protein localises to the nucleolus. S-adenosyl-L-methionine-dependent protein-lysine N-methyltransferase that trimethylates 60S ribosomal protein L12 (rpl1201 and rpl1202) at 'Lys-4' and may dimethylate L12 also at 'Lys-40' and 'Lys-41'. Overexpression causes a severe growth defect. Has a role in meiosis. The polypeptide is Ribosomal lysine N-methyltransferase set11 (set11) (Schizosaccharomyces pombe (strain 972 / ATCC 24843) (Fission yeast)).